The primary structure comprises 345 residues: Probable S-adenosylmethionine carrier 2, chloroplastic (345 aa).

Residues 1 to 31 (MTKALSGFCCSLSLSTLVRSSSSHMDSDIVS) constitute a chloroplast transit peptide. 3 Solcar repeats span residues 76–148 (RVLY…TKQK), 157–239 (LSAV…LRIG), and 252–334 (ENAM…TKQI). Helical transmembrane passes span 82–102 (LITG…IDTI), 121–141 (YSGL…FFGV), 156–176 (NLSA…SSIV), 254–274 (AMIG…LDVI), and 309–329 (GMGP…GVLE).

The protein belongs to the mitochondrial carrier (TC 2.A.29) family. Expressed at low levels in seedlings, leaves, flowers, stems and roots.

The protein resides in the plastid. It localises to the chloroplast membrane. Functionally, probable S-adenosylmethionine (SAM) transporter able to catalyze both uniport and exchange reactions through membranes. The polypeptide is Probable S-adenosylmethionine carrier 2, chloroplastic (SAMC2) (Arabidopsis thaliana (Mouse-ear cress)).